Here is an 87-residue protein sequence, read N- to C-terminus: uncharacterized protein (87 aa).

An N-terminal signal peptide occupies residues 1-26; the sequence is MMSTQHFILSLTILIIISNLHDEVNA. Intrachain disulfides connect Cys61–Cys75, Cys68–Cys79, and Cys74–Cys84.

It is found in the secreted. This is an uncharacterized protein from Schistosoma japonicum (Blood fluke).